The primary structure comprises 230 residues: MKITKTELFLRLAKPNEQGISRWVKTSEFAGEYKDLKLGNGGSWCRKDSPLARDYIVEFDKGLTSGNSIDAIRLNGFNQEKHFKQYIRKDIKDALKTRNCVMLGVNGKSENTKIEIDHKDGRKNNHRVSDIKTQKLEDFQPLCKAANDVKRQICKTCKETNKRWSAKNISGNPYAFYMGDENYSEELGCVGCYQYDPVEYRKSSVKRIAAEAAKYTSDYIFKKLYEEDNG.

It carries out the reaction Endonucleolytic cleavage of DNA to give specific double-stranded fragments with terminal 5'-phosphates.. In terms of biological role, a P subtype restriction enzyme that recognizes the double-stranded sequence 5'-CATG-3' and cleaves after G-4. This Neisseria lactamica protein is Type II restriction enzyme NlaIII (nlaIIIR).